Reading from the N-terminus, the 429-residue chain is Adenylosuccinate synthetase (429 aa).

GTP contacts are provided by residues G13–K19 and G41–T43. The active-site Proton acceptor is D14. Positions 14 and 41 each coordinate Mg(2+). Residues D14–K17, N39–H42, T130, R144, Q225, T240, and R304 contribute to the IMP site. H42 (proton donor) is an active-site residue. A300–R306 serves as a coordination point for substrate. GTP contacts are provided by residues R306, K332–D334, and S417–G419.

It belongs to the adenylosuccinate synthetase family. In terms of assembly, homodimer. Mg(2+) is required as a cofactor.

It is found in the cytoplasm. It catalyses the reaction IMP + L-aspartate + GTP = N(6)-(1,2-dicarboxyethyl)-AMP + GDP + phosphate + 2 H(+). It functions in the pathway purine metabolism; AMP biosynthesis via de novo pathway; AMP from IMP: step 1/2. Plays an important role in the de novo pathway of purine nucleotide biosynthesis. Catalyzes the first committed step in the biosynthesis of AMP from IMP. The chain is Adenylosuccinate synthetase from Buchnera aphidicola subsp. Baizongia pistaciae (strain Bp).